A 353-amino-acid polypeptide reads, in one-letter code: Inactive ADP-ribosyltransferase ARH2 (353 aa).

Residue S27 is modified to Phosphoserine.

Belongs to the ADP-ribosylglycohydrolase family.

Its subcellular location is the cytoplasm. The protein localises to the myofibril. The protein resides in the sarcomere. Functionally, required for myofibril assembly and outgrowth of the cardiac chambers in the developing heart. Appears to be catalytically inactive, showing no activity against O-acetyl-ADP-ribose. The chain is Inactive ADP-ribosyltransferase ARH2 (Adprhl1) from Rattus norvegicus (Rat).